The sequence spans 502 residues: Maturase K (502 aa).

Belongs to the intron maturase 2 family. MatK subfamily.

The protein localises to the plastid. It is found in the chloroplast. In terms of biological role, usually encoded in the trnK tRNA gene intron. Probably assists in splicing its own and other chloroplast group II introns. Binds its homologous trnK precursor transcript. This chain is Maturase K, found in Sinapis alba (White mustard).